A 346-amino-acid polypeptide reads, in one-letter code: GTP-binding RHO-like protein (346 aa).

Residues 1–10 (MTPNGSRRHS) are compositionally biased toward basic residues. The segment at 1 to 25 (MTPNGSRRHSAYMGSPRSQHSSTME) is disordered. Residues 16–25 (PRSQHSSTME) show a composition bias toward polar residues. Position 82-89 (82-89 (GDGGCGKT)) interacts with GTP. Residues 104 to 112 (YVPTVFENY) carry the Effector region motif. Residues 130-134 (DTAGQ) and 188-191 (TKSD) each bind GTP. Residues 259–294 (LGGSNGGSGNHSRHHSRNYSNVSNNRRGHLKNTSYD) form a disordered region. Cys343 carries the cysteine methyl ester modification. Cys343 is lipidated: S-geranylgeranyl cysteine. A propeptide spans 344 to 346 (VIL) (removed in mature form).

Belongs to the small GTPase superfamily. Rho family.

Its subcellular location is the cell membrane. This Candida albicans (strain WO-1) (Yeast) protein is GTP-binding RHO-like protein (CRL1).